The chain runs to 146 residues: 3-hydroxyacyl-[acyl-carrier-protein] dehydratase FabZ (146 aa).

Residue His49 is part of the active site.

Belongs to the thioester dehydratase family. FabZ subfamily.

The protein localises to the cytoplasm. It carries out the reaction a (3R)-hydroxyacyl-[ACP] = a (2E)-enoyl-[ACP] + H2O. In terms of biological role, involved in unsaturated fatty acids biosynthesis. Catalyzes the dehydration of short chain beta-hydroxyacyl-ACPs and long chain saturated and unsaturated beta-hydroxyacyl-ACPs. In Pseudomonas fluorescens (strain Pf0-1), this protein is 3-hydroxyacyl-[acyl-carrier-protein] dehydratase FabZ.